Here is a 627-residue protein sequence, read N- to C-terminus: MFNFKLSQQVLKNSTKSIMPILKKPFSTSHAKGDLFKYQSQLPKLPVPTLEETASKYLKTVEPFLNQEQLESTKAKVAEFVRPGGAGEALQARLNNFAADKDNWLAEFWDDYAYMSYRDPVVPYVSYFFSHKDVKNIIGQDQLLKATLIAYYTIEFQEKVLDESLDPEVIKGNPFCMNAFKYMFNNSRVPAEGSDITQHYNGEENQFFVVIYKNNFYKVPTHKNGQRLTKGEIYSYLQEIKNDATPKGLGLGALTSLNRDEWLSAYNNLLKSPINEASLGSIFASSFVIALDSNNPVTIEEKSKNCWHGDGQNRFFDKPLEFFVSANGNSGFLGEHSRMDATPTVQLNNTIYKQILETNPNDLIVEIGSSAPRFGNAEILPFDINPTTRANIKDAIAKFDATIAAHDEEIFQHYGYGKGLIKKFKVSPDAYVQLLMQLAYFKYTGKIRPTYESAATRKFLKGRTETGRTVSNESKKFVETWSDPNASSADKVATFQAAAKQHVAYLSAAADGKGVDRHLFGLKQMIQPGEPIPEIFTDPIFSYSQTWYISSSQVPSEFFQSWGWSQVIDDGFGLAYLINNDWIHVHISCKRGNGLQSDHLKWYLVDSANEMKDVLTKGLLTDAKPKL.

Histidine 336 (proton acceptor) is an active-site residue. CoA contacts are provided by residues lysine 418 and 422–429 (KKFKVSPD). (R)-carnitine-binding residues include tyrosine 451, serine 453, and threonine 464. Glutamine 553 is a CoA binding site. A Microbody targeting signal motif is present at residues 625–627 (PKL).

It belongs to the carnitine/choline acetyltransferase family.

It is found in the peroxisome. Its subcellular location is the mitochondrion inner membrane. It catalyses the reaction (R)-carnitine + acetyl-CoA = O-acetyl-(R)-carnitine + CoA. In terms of biological role, carnitine acetylase is specific for short chain fatty acids. Carnitine acetylase seems to affect the flux through the pyruvate dehydrogenase complex. It may be involved as well in the transport of acetyl-CoA into mitochondria. In Candida tropicalis (Yeast), this protein is Carnitine O-acetyltransferase, mitochondrial (CAT2).